An 84-amino-acid chain; its full sequence is Toluene-4-monooxygenase system, hydroxylase component subunit gamma (84 aa).

It belongs to the TmoB/XamoB family. As to quaternary structure, the alkene monooxygenase multicomponent enzyme system is composed of an electron transfer component and a monooxygenase component interacting with the effector protein TmoD. The electron transfer component is composed of a ferredoxin reductase (TmoF) and a ferredoxin (TmoC), and the monooxygenase component is formed by a heterohexamer (dimer of heterotrimers) of two alpha subunits (TmoA), two beta subunits (TmoE) and two gamma subunits (TmoB).

It catalyses the reaction toluene + NADH + O2 + H(+) = 4-methylphenol + NAD(+) + H2O. It functions in the pathway xenobiotic degradation; toluene degradation. Its activity is regulated as follows. Inhibited by Zn(2+) and Cu(2+). Component of the toluene-4-monooxygenase multicomponent enzyme system which catalyzes the O2- and NADH-dependent hydroxylation of toluene to form p-cresol. Also able to convert benzene to phenol, catechol, and 1,2,3-trihydroxybenzene by successive hydroxylations. In Ectopseudomonas mendocina (Pseudomonas mendocina), this protein is Toluene-4-monooxygenase system, hydroxylase component subunit gamma.